The sequence spans 227 residues: Cytochrome c oxidase subunit 2 (227 aa).

Residues 1–14 (MAYPLQMGLQDATS) lie on the Mitochondrial intermembrane side of the membrane. Residues 15–45 (PIMEELLHFHDHTLMIVFLISSLVLYIISLM) form a helical membrane-spanning segment. Residues 46-59 (LTTKLTHTSTMDAQ) are Mitochondrial matrix-facing. The helical transmembrane segment at 60–87 (EVETVWTILPAIILILIALPSLRILYMM) threads the bilayer. Over 88–227 (DEINNPSLTV…HFEKWSTSML (140 aa)) the chain is Mitochondrial intermembrane. Residues His-161, Cys-196, Glu-198, Cys-200, His-204, and Met-207 each contribute to the Cu cation site. Glu-198 provides a ligand contact to Mg(2+).

It belongs to the cytochrome c oxidase subunit 2 family. Component of the cytochrome c oxidase (complex IV, CIV), a multisubunit enzyme composed of 14 subunits. The complex is composed of a catalytic core of 3 subunits MT-CO1, MT-CO2 and MT-CO3, encoded in the mitochondrial DNA, and 11 supernumerary subunits COX4I, COX5A, COX5B, COX6A, COX6B, COX6C, COX7A, COX7B, COX7C, COX8 and NDUFA4, which are encoded in the nuclear genome. The complex exists as a monomer or a dimer and forms supercomplexes (SCs) in the inner mitochondrial membrane with NADH-ubiquinone oxidoreductase (complex I, CI) and ubiquinol-cytochrome c oxidoreductase (cytochrome b-c1 complex, complex III, CIII), resulting in different assemblies (supercomplex SCI(1)III(2)IV(1) and megacomplex MCI(2)III(2)IV(2)). Found in a complex with TMEM177, COA6, COX18, COX20, SCO1 and SCO2. Interacts with TMEM177 in a COX20-dependent manner. Interacts with COX20. Interacts with COX16. Requires Cu cation as cofactor.

Its subcellular location is the mitochondrion inner membrane. The enzyme catalyses 4 Fe(II)-[cytochrome c] + O2 + 8 H(+)(in) = 4 Fe(III)-[cytochrome c] + 2 H2O + 4 H(+)(out). Component of the cytochrome c oxidase, the last enzyme in the mitochondrial electron transport chain which drives oxidative phosphorylation. The respiratory chain contains 3 multisubunit complexes succinate dehydrogenase (complex II, CII), ubiquinol-cytochrome c oxidoreductase (cytochrome b-c1 complex, complex III, CIII) and cytochrome c oxidase (complex IV, CIV), that cooperate to transfer electrons derived from NADH and succinate to molecular oxygen, creating an electrochemical gradient over the inner membrane that drives transmembrane transport and the ATP synthase. Cytochrome c oxidase is the component of the respiratory chain that catalyzes the reduction of oxygen to water. Electrons originating from reduced cytochrome c in the intermembrane space (IMS) are transferred via the dinuclear copper A center (CU(A)) of subunit 2 and heme A of subunit 1 to the active site in subunit 1, a binuclear center (BNC) formed by heme A3 and copper B (CU(B)). The BNC reduces molecular oxygen to 2 water molecules using 4 electrons from cytochrome c in the IMS and 4 protons from the mitochondrial matrix. The sequence is that of Cytochrome c oxidase subunit 2 (MT-CO2) from Halichoerus grypus (Gray seal).